Consider the following 428-residue polypeptide: Enolase (428 aa).

Glutamine 163 is a (2R)-2-phosphoglycerate binding site. Residue glutamate 205 is the Proton donor of the active site. Residues aspartate 242, glutamate 286, and aspartate 313 each coordinate Mg(2+). The (2R)-2-phosphoglycerate site is built by lysine 338, arginine 367, serine 368, and lysine 389. Lysine 338 (proton acceptor) is an active-site residue.

This sequence belongs to the enolase family. Requires Mg(2+) as cofactor.

It is found in the cytoplasm. The protein localises to the secreted. It localises to the cell surface. The enzyme catalyses (2R)-2-phosphoglycerate = phosphoenolpyruvate + H2O. It functions in the pathway carbohydrate degradation; glycolysis; pyruvate from D-glyceraldehyde 3-phosphate: step 4/5. Its function is as follows. Catalyzes the reversible conversion of 2-phosphoglycerate (2-PG) into phosphoenolpyruvate (PEP). It is essential for the degradation of carbohydrates via glycolysis. This is Enolase from Bordetella avium (strain 197N).